A 312-amino-acid polypeptide reads, in one-letter code: Homoserine O-succinyltransferase (312 aa).

Cysteine 142 (acyl-thioester intermediate) is an active-site residue. Positions 163 and 192 each coordinate substrate. Histidine 235 serves as the catalytic Proton acceptor. Glutamate 237 is a catalytic residue. Arginine 249 serves as a coordination point for substrate.

The protein belongs to the MetA family.

It localises to the cytoplasm. The enzyme catalyses L-homoserine + succinyl-CoA = O-succinyl-L-homoserine + CoA. The protein operates within amino-acid biosynthesis; L-methionine biosynthesis via de novo pathway; O-succinyl-L-homoserine from L-homoserine: step 1/1. Functionally, transfers a succinyl group from succinyl-CoA to L-homoserine, forming succinyl-L-homoserine. The chain is Homoserine O-succinyltransferase from Aliivibrio salmonicida (strain LFI1238) (Vibrio salmonicida (strain LFI1238)).